The chain runs to 267 residues: NADP-dependent mannitol dehydrogenase (267 aa).

Asparagine 108 and lysine 141 together coordinate NADP(+). Catalysis depends on serine 160, which acts as the Proton donor. NADP(+) contacts are provided by tyrosine 175, lysine 179, isoleucine 207, and threonine 209. Tyrosine 175 acts as the Proton acceptor in catalysis. Catalysis depends on lysine 179, which acts as the Lowers pKa of active site Tyr.

It belongs to the short-chain dehydrogenases/reductases (SDR) family. As to quaternary structure, exists as monomer, dimer and tetramer.

The enzyme catalyses D-mannitol + NADP(+) = D-fructose + NADPH + H(+). In terms of biological role, interconverts D-mannitol and D-fructose. Not active with fructose 6-phosphate or NADH. This Davidiella tassiana (Mycosphaerella tassiana) protein is NADP-dependent mannitol dehydrogenase.